Consider the following 385-residue polypeptide: DNA replication and repair protein RecF (385 aa).

30 to 37 (GPNGFGKT) contacts ATP.

Belongs to the RecF family.

It is found in the cytoplasm. In terms of biological role, the RecF protein is involved in DNA metabolism; it is required for DNA replication and normal SOS inducibility. RecF binds preferentially to single-stranded, linear DNA. It also seems to bind ATP. This chain is DNA replication and repair protein RecF, found in Mycobacterium marinum (strain ATCC BAA-535 / M).